The chain runs to 563 residues: Pre-hexon-linking protein IIIa (563 aa).

Residues 1–117 (MRKRRTLTAP…ALLHRVSKYN (117 aa)) form a peripentonal hexon-tethering domain region. Residues 148–261 (GSLTALNSFL…FTDSVSISRD (114 aa)) form a binding to hexon-linking protein region. Ser235 is modified (phosphoserine; by host). A Phosphothreonine; by host modification is found at Thr284. The segment at 449-472 (RTESRSVSRVPTPASSRRSSVAMA) is disordered. Phosphoserine; by host occurs at positions 452 and 456. The segment covering 462–472 (ASSRRSSVAMA) has biased composition (low complexity). A phosphoserine; by host mark is found at Ser475 and Ser486. Residues 522 to 543 (KYSSAISSDESDDGMSKPDKFL) form a disordered region. A propeptide spanning residues 549-563 (GNPFAHLRPKLGRCL) is cleaved from the precursor.

This sequence belongs to the adenoviridae hexon-linking protein IIIa family. As to quaternary structure, interacts with hexon proteins; this interaction tethers the peripentonal hexons to hexons situated in the facet. Interacts with the penton protein (via N-terminus). Interacts with packaging protein 3; this interaction is required to promote correct genome packaging. Cleaved near the C-terminus by the viral protease during virion maturation to form the mature protein.

The protein localises to the virion. It is found in the host nucleus. Structural component of the virion that acts as a cement protein on the capsid exterior which mediates the interactions between the hexons, including the peripentonal hexons, and reaches all the way to the penton vertices. Two hexon linking proteins IIIa, one from each facet, stabilize the unique edge interface between a pair of facets. As the virus enters the host cell, hexon linking proteins IIIa are shed concomitant with virion acidification in the endosome. During virus assembly, seems to play a role in the serotype specificity of the packaging of viral DNA via its interaction with packaging protein 3. The sequence is that of Pre-hexon-linking protein IIIa from Canis lupus familiaris (Dog).